Reading from the N-terminus, the 508-residue chain is Probable cytosol aminopeptidase (508 aa).

The Mn(2+) site is built by K274 and D279. K286 is an active-site residue. Mn(2+) contacts are provided by D297, D356, and E358. R360 is a catalytic residue.

It belongs to the peptidase M17 family. Mn(2+) serves as cofactor.

It localises to the cytoplasm. The enzyme catalyses Release of an N-terminal amino acid, Xaa-|-Yaa-, in which Xaa is preferably Leu, but may be other amino acids including Pro although not Arg or Lys, and Yaa may be Pro. Amino acid amides and methyl esters are also readily hydrolyzed, but rates on arylamides are exceedingly low.. The catalysed reaction is Release of an N-terminal amino acid, preferentially leucine, but not glutamic or aspartic acids.. Functionally, presumably involved in the processing and regular turnover of intracellular proteins. Catalyzes the removal of unsubstituted N-terminal amino acids from various peptides. In Cutibacterium acnes (strain DSM 16379 / KPA171202) (Propionibacterium acnes), this protein is Probable cytosol aminopeptidase.